The following is a 140-amino-acid chain: Nucleoside diphosphate kinase (140 aa).

Residues Lys11, Phe59, Arg87, Thr93, Arg104, and Asn114 each contribute to the ATP site. His117 acts as the Pros-phosphohistidine intermediate in catalysis.

This sequence belongs to the NDK family. In terms of assembly, homotetramer. Mg(2+) serves as cofactor.

The protein localises to the cytoplasm. The catalysed reaction is a 2'-deoxyribonucleoside 5'-diphosphate + ATP = a 2'-deoxyribonucleoside 5'-triphosphate + ADP. The enzyme catalyses a ribonucleoside 5'-diphosphate + ATP = a ribonucleoside 5'-triphosphate + ADP. Major role in the synthesis of nucleoside triphosphates other than ATP. The ATP gamma phosphate is transferred to the NDP beta phosphate via a ping-pong mechanism, using a phosphorylated active-site intermediate. In Rickettsia typhi (strain ATCC VR-144 / Wilmington), this protein is Nucleoside diphosphate kinase.